Consider the following 161-residue polypeptide: Allophycocyanin alpha chain 1 (161 aa).

Residue asparagine 71 is modified to N4-methylasparagine. Position 81 (cysteine 81) interacts with (2R,3E)-phycocyanobilin.

It belongs to the phycobiliprotein family. Component of the phycobilisome. Heterodimer of an alpha and a beta chain. Post-translationally, contains one covalently linked bilin chromophore.

It is found in the cellular thylakoid membrane. Its function is as follows. Light-harvesting photosynthetic bile pigment-protein from the phycobiliprotein complex. Allophycocyanin has a maximum absorption at approximately 650 nanometers. The polypeptide is Allophycocyanin alpha chain 1 (Microchaete diplosiphon (Fremyella diplosiphon)).